The chain runs to 1315 residues: Activating molecule in BECN1-regulated autophagy protein 1A (1315 aa).

WD repeat units follow at residues 50–89 (DSPRSTFLLAFSPDRSLMASTHVNHNIYITEVKSGKCVHS), 92–132 (GHRR…ESWL), and 134–174 (ESNS…TVVK). Disordered regions lie at residues 294–322 (RVPSPPDEDPSDSASLEAQAHTFSSARTE), 342–409 (FSSV…QRTG), 426–463 (FQSPVYTSASDRWGSTPGTSSSRHRPPEEEGQSSSSSI), 502–526 (NNNMDPEQPGPSHYQSPYSGENPPH), 545–610 (SRRW…DTGQ), 630–660 (VYRQSASSRSANISQGALNQEMPEDTPDNDY), 681–736 (RDSV…PRNA), 985–1134 (HSDG…STGQ), 1181–1208 (GSQTGADAQNRTRLSPIPGPSSGAPESL), and 1286–1315 (LLSSSPSLSPVNNSNYSNSDSSYLGDEYGR). A compositionally biased stretch (polar residues) spans 351-360 (NMRNHSSSSG). Basic and acidic residues predominate over residues 378–388 (PGREGGGRHPG). Polar residues-rich tracts occupy residues 394–409 (SGLNGQSSSMTPQRTG) and 426–435 (FQSPVYTSAS). Composition is skewed to polar residues over residues 552–581 (GQPSSTERNTPWQPSSSAFHSVAPVSQSNE) and 633–647 (QSASSRSANISQGAL). A compositionally biased stretch (low complexity) spans 696 to 715 (RPLSSNPSSLSPSPVPNAES). The span at 716–725 (SEVDFEEFEE) shows a compositional bias: acidic residues. Low complexity predominate over residues 1009-1021 (PSSSRSGDRAGSS). Positions 1022–1031 (RTDRRSRRDI) are enriched in basic and acidic residues. Residues 1047-1060 (SVTSQGTQTQNQRL) show a composition bias toward polar residues. Short sequence motifs (TQT motif) lie at residues 1053-1055 (TQT) and 1065-1067 (TQT). The segment covering 1061 to 1072 (QHAETQTDRDLP) has biased composition (basic and acidic residues). Positions 1076 to 1090 (QQPSTSQGSQVTDAT) are enriched in polar residues. The segment covering 1091 to 1103 (ESLDFETLPEDSG) has biased composition (acidic residues). Polar residues-rich tracts occupy residues 1125-1134 (SEPSTDSTGQ) and 1181-1193 (GSQTGADAQNRTR). Residues 1286–1307 (LLSSSPSLSPVNNSNYSNSDSS) show a composition bias toward low complexity.

This sequence belongs to the WD repeat AMBRA1 family. In terms of assembly, component of the DCX(AMBRA1) E3 ubiquitin ligase complex.

It is found in the endoplasmic reticulum. The protein localises to the cytoplasm. It localises to the cytoskeleton. The protein resides in the cytoplasmic vesicle. Its subcellular location is the autophagosome. It is found in the mitochondrion. The protein localises to the cytosol. It localises to the nucleus. The protein resides in the cell junction. Its subcellular location is the focal adhesion. It functions in the pathway protein modification; protein ubiquitination. Functionally, substrate-recognition component of a DCX (DDB1-CUL4-X-box) E3 ubiquitin-protein ligase complex involved in cell cycle control and autophagy. The DCX(AMBRA1) complex specifically mediates the polyubiquitination of target proteins. Acts as an upstream master regulator of the transition from G1 to S cell phase: ambra1a specifically recognizes and binds phosphorylated cyclin-D (ccnd1, ccnd2 and ccnd3), leading to cyclin-D ubiquitination by the DCX(AMBRA1) complex and subsequent degradation. Acts as a regulator of Cul5-RING (CRL5) E3 ubiquitin-protein ligase complexes by mediating ubiquitination and degradation of Elongin-C (eloc) component of CRL5 complexes. Acts as a key regulator of autophagy by modulating the BECN1-PIK3C3 complex: controls protein turnover during neuronal development, and regulates normal cell survival and proliferation. In normal conditions, ambra1a is tethered to the cytoskeleton via interaction with dyneins light chains. Upon autophagy induction, ambra1a is released from the cytoskeletal docking site to induce autophagosome nucleation by mediating ubiquitination of proteins involved in autophagy. Also acts as an activator of mitophagy. Required for skeletal muscle development. This Danio rerio (Zebrafish) protein is Activating molecule in BECN1-regulated autophagy protein 1A.